Reading from the N-terminus, the 318-residue chain is Coproporphyrin III ferrochelatase (318 aa).

Residues H186 and E268 each contribute to the Fe(2+) site.

The protein belongs to the ferrochelatase family.

Its subcellular location is the cytoplasm. It carries out the reaction Fe-coproporphyrin III + 2 H(+) = coproporphyrin III + Fe(2+). It participates in porphyrin-containing compound metabolism; protoheme biosynthesis. Its function is as follows. Involved in coproporphyrin-dependent heme b biosynthesis. Catalyzes the insertion of ferrous iron into coproporphyrin III to form Fe-coproporphyrin III. This is Coproporphyrin III ferrochelatase from Lactococcus lactis subsp. cremoris (strain MG1363).